A 560-amino-acid chain; its full sequence is Chaperonin GroEL 2 (560 aa).

ATP-binding positions include 29 to 32 (TIGP), 86 to 90 (DGTTT), Gly413, and Asp492. The tract at residues 520–542 (DKPEPPSAPGAEGGDPMGGMGGM) is disordered. Residues 530-542 (AEGGDPMGGMGGM) are compositionally biased toward gly residues.

This sequence belongs to the chaperonin (HSP60) family. Forms a cylinder of 14 subunits composed of two heptameric rings stacked back-to-back. Interacts with the co-chaperonin GroES.

Its subcellular location is the cytoplasm. It carries out the reaction ATP + H2O + a folded polypeptide = ADP + phosphate + an unfolded polypeptide.. In terms of biological role, together with its co-chaperonin GroES, plays an essential role in assisting protein folding. The GroEL-GroES system forms a nano-cage that allows encapsulation of the non-native substrate proteins and provides a physical environment optimized to promote and accelerate protein folding. This is Chaperonin GroEL 2 from Prochlorococcus marinus (strain NATL2A).